We begin with the raw amino-acid sequence, 335 residues long: Deoxyhypusine hydroxylase (335 aa).

HEAT-like PBS-type repeat units lie at residues 71–97 (LKHE…VAKD), 104–130 (CRHE…LRDN), 200–233 (LRYR…GLKD), 238–264 (FRHE…ALSN), and 271–298 (VRHE…FLND). Fe cation contacts are provided by H73, E74, H106, and E107. Residues H240, E241, H273, and E274 each contribute to the Fe cation site.

It belongs to the deoxyhypusine hydroxylase family. Fe(2+) serves as cofactor.

Its subcellular location is the cytoplasm. The protein localises to the nucleus. The catalysed reaction is [eIF5A protein]-deoxyhypusine + AH2 + O2 = [eIF5A protein]-hypusine + A + H2O. It functions in the pathway protein modification; eIF5A hypusination. Functionally, catalyzes the hydroxylation of the N(6)-(4-aminobutyl)-L-lysine intermediate to form hypusine, an essential post-translational modification only found in mature eIF-5A factor. The chain is Deoxyhypusine hydroxylase (lia1) from Aspergillus fumigatus (strain ATCC MYA-4609 / CBS 101355 / FGSC A1100 / Af293) (Neosartorya fumigata).